A 1500-amino-acid polypeptide reads, in one-letter code: Secreted chitinase LysM12 (1500 aa).

A signal peptide spans 1–23; that stretch reads MAPLWNGMAAGLLLSAAVVSGQA. N-linked (GlcNAc...) asparagine glycosylation is found at asparagine 53, asparagine 225, asparagine 251, and asparagine 270. LysM domains are found at residues 303-348 and 367-415; these read RTQK…HVCC and ATTT…VICI. Residues 428 to 496 enclose the Chitin-binding type-1 domain; that stretch reads DAECGPQVPG…TNGCISHCGM (69 aa). 4 cysteine pairs are disulfide-bonded: cysteine 431/cysteine 459, cysteine 453/cysteine 465, cysteine 458/cysteine 472, and cysteine 490/cysteine 494. The region spanning 507-879 is the GH18 domain; that stretch reads FRSVGYYESY…PGMILQMKSG (373 aa). The active-site Proton donor is glutamate 625. Tyrosine 626 contacts chitin. N-linked (GlcNAc...) asparagine glycosylation is found at asparagine 721 and asparagine 800. Tryptophan 852 contributes to the chitin binding site. 2 N-linked (GlcNAc...) asparagine glycosylation sites follow: asparagine 892 and asparagine 983. Residues 1164–1193 form a disordered region; sequence IPKDIPYPDKTKRKDKDDDDNKKTEATDSE. The segment covering 1169 to 1193 has biased composition (basic and acidic residues); sequence PYPDKTKRKDKDDDDNKKTEATDSE.

The protein belongs to the glycosyl hydrolase 18 family. Chitinase class V subfamily.

It localises to the secreted. The enzyme catalyses Random endo-hydrolysis of N-acetyl-beta-D-glucosaminide (1-&gt;4)-beta-linkages in chitin and chitodextrins.. In terms of biological role, secreted chitinase involved in the degradation of chitin, a component of the cell walls of fungi and exoskeletal elements of some animals (including worms and arthropods). Involved in pathogenesis via manipulation of host defenses for successful infection. The protein is Secreted chitinase LysM12 of Penicillium expansum (Blue mold rot fungus).